The sequence spans 170 residues: Ecotin (170 aa).

The N-terminal stretch at 1–21 (MNKASVVFSGLLMAVSASAIA) is a signal peptide. A disulfide bridge links C78 with C115.

The protein belongs to the protease inhibitor I11 (ecotin) family. In terms of assembly, homodimer.

It is found in the periplasm. Its function is as follows. General inhibitor of pancreatic serine proteases: inhibits chymotrypsin, trypsin, elastases, factor X, kallikrein as well as a variety of other proteases. The sequence is that of Ecotin from Serratia proteamaculans (strain 568).